A 259-amino-acid polypeptide reads, in one-letter code: Bacillaene synthase dehydratase PksH (259 aa).

Active-site residues include Asp68 and Glu137.

The protein belongs to the enoyl-CoA hydratase/isomerase family.

Its subcellular location is the cytoplasm. It functions in the pathway antibiotic biosynthesis; bacillaene biosynthesis. Its function is as follows. Involved in some intermediate steps for the synthesis of the antibiotic polyketide bacillaene which is involved in secondary metabolism. Catalyzes the dehydration of the (S)-3-hydroxy-3-methylglutaryl group tethered to PksL to a 3-methylglutaconyl moiety. The polypeptide is Bacillaene synthase dehydratase PksH (pksH) (Bacillus subtilis (strain 168)).